Reading from the N-terminus, the 636-residue chain is 1-deoxy-D-xylulose-5-phosphate synthase (636 aa).

Thiamine diphosphate contacts are provided by residues His-77 and 118-120 (GHS). Residue Asp-149 participates in Mg(2+) binding. Thiamine diphosphate-binding positions include 150–151 (GA), Asn-178, Tyr-290, and Glu-375. Asn-178 provides a ligand contact to Mg(2+).

It belongs to the transketolase family. DXPS subfamily. As to quaternary structure, homodimer. The cofactor is Mg(2+). It depends on thiamine diphosphate as a cofactor.

It catalyses the reaction D-glyceraldehyde 3-phosphate + pyruvate + H(+) = 1-deoxy-D-xylulose 5-phosphate + CO2. Its pathway is metabolic intermediate biosynthesis; 1-deoxy-D-xylulose 5-phosphate biosynthesis; 1-deoxy-D-xylulose 5-phosphate from D-glyceraldehyde 3-phosphate and pyruvate: step 1/1. Catalyzes the acyloin condensation reaction between C atoms 2 and 3 of pyruvate and glyceraldehyde 3-phosphate to yield 1-deoxy-D-xylulose-5-phosphate (DXP). The chain is 1-deoxy-D-xylulose-5-phosphate synthase from Cytophaga hutchinsonii (strain ATCC 33406 / DSM 1761 / CIP 103989 / NBRC 15051 / NCIMB 9469 / D465).